The primary structure comprises 192 residues: MSKQDDMRAYLPPFLTSLKEMAELLKAEAPEFDKQNDSIFDLTDQLFVPTATWGLSRWEKILNVPRESGDTDEIRRLRLISKMSNIPPITYRAIEQAVNRFLKNPSAQVRLLPGEYRFNVDINVDDLQHMNELIEAIENMKPAHLAYTLRGGLNETLRIKDTVILNHRRYRTASELKVGYSVTLNNNEVVLT.

It to B.subtilis YqcA.

In Bacillus subtilis (strain 168), this protein is Phage-like element PBSX protein XkdU (xkdU).